We begin with the raw amino-acid sequence, 91 residues long: UPF0512 protein M (91 aa).

Belongs to the UPF0512 family.

This chain is UPF0512 protein M, found in Dictyostelium discoideum (Social amoeba).